Reading from the N-terminus, the 153-residue chain is Transcriptional repressor NrdR (153 aa).

The segment at 3 to 34 (CPFCNHLHDKVVDSRESKEGDAIRRRRECLEC) is a zinc-finger region. Positions 49–139 (YMVVKKDGRR…VYRDFQDEQA (91 aa)) constitute an ATP-cone domain.

It belongs to the NrdR family. Requires Zn(2+) as cofactor.

Functionally, negatively regulates transcription of bacterial ribonucleotide reductase nrd genes and operons by binding to NrdR-boxes. The sequence is that of Transcriptional repressor NrdR from Solibacter usitatus (strain Ellin6076).